The following is a 434-amino-acid chain: Trigger factor (434 aa).

Positions 161–246 (EDRATLDFTG…LKKVEVRELP (86 aa)) constitute a PPIase FKBP-type domain.

Belongs to the FKBP-type PPIase family. Tig subfamily.

It is found in the cytoplasm. It carries out the reaction [protein]-peptidylproline (omega=180) = [protein]-peptidylproline (omega=0). Its function is as follows. Involved in protein export. Acts as a chaperone by maintaining the newly synthesized protein in an open conformation. Functions as a peptidyl-prolyl cis-trans isomerase. The polypeptide is Trigger factor (Yersinia pseudotuberculosis serotype O:1b (strain IP 31758)).